The sequence spans 66 residues: Toxin Aah6 (66 aa).

Residues arginine 2–serine 65 form the LCN-type CS-alpha/beta domain. N-linked (GlcNAc...) asparagine glycosylation occurs at asparagine 9. Cystine bridges form between cysteine 13/cysteine 64, cysteine 17/cysteine 40, cysteine 26/cysteine 45, and cysteine 30/cysteine 47.

It belongs to the long (4 C-C) scorpion toxin superfamily. Sodium channel inhibitor family. Beta subfamily. In terms of processing, N-glycans are core-fucosylated, heterogeneous and short which could be the result of extensive trimming. Expressed by the venom gland.

The protein localises to the secreted. Functionally, beta toxins bind voltage-independently at site-4 of sodium channels and shift the voltage of activation toward more negative potentials thereby affecting sodium channel activation and promoting spontaneous and repetitive firing. This toxin is active only on insects. This toxin has very low anti-insect activity. The chain is Toxin Aah6 from Androctonus australis (Sahara scorpion).